The following is a 199-amino-acid chain: Probable V-type proton ATPase 20 kDa proteolipid subunit (199 aa).

Over 1-3 (MSL) the chain is Vacuolar. Residues 4–24 (FSTSLWTTTVMSIIVGLYMLF) form a helical membrane-spanning segment. At 25–46 (HNSGESFDFGSFLLDTSPYTWG) the chain is on the cytoplasmic side. Residues 47 to 67 (LLGIASCVAFGIIGAAWGIFI) form a helical membrane-spanning segment. The Vacuolar segment spans residues 68–86 (CGTSILGGAVKAPRIKTKN). The chain crosses the membrane as a helical span at residues 87–107 (LISIIFCEVVAIYSLIIAIVF). Residues 108–130 (SAKINDINPAGFYTKSHYYTGFA) are Cytoplasmic-facing. A helical transmembrane segment spans residues 131-151 (LFWGGITVGLCNLICGVCVGI). Residues 152-170 (TGSSAALADAQDASLFVKV) are Vacuolar-facing. A helical transmembrane segment spans residues 171–191 (LVVEIFGSVLGLFGLIVGLLI). Residues 192-199 (GGKASDFS) lie on the Cytoplasmic side of the membrane.

The protein belongs to the V-ATPase proteolipid subunit family. In terms of assembly, V-ATPase is a heteromultimeric enzyme composed of a peripheral catalytic V1 complex (components A to H) attached to an integral membrane V0 proton pore complex (components: a, c, c', c'', d, e, f and VOA1). The decameric c-ring forms the proton-conducting pore, and is composed of eight proteolipid subunits c, one subunit c' and one subunit c''.

It localises to the vacuole membrane. Its function is as follows. Proton-conducting pore forming subunit of the V0 complex of vacuolar(H+)-ATPase (V-ATPase), a multisubunit enzyme composed of a peripheral complex (V1) that hydrolyzes ATP and a membrane integral complex (V0) that translocates protons. V-ATPase is responsible for acidifying and maintaining the pH of intracellular compartments. This chain is Probable V-type proton ATPase 20 kDa proteolipid subunit (vma16), found in Schizosaccharomyces pombe (strain 972 / ATCC 24843) (Fission yeast).